The chain runs to 172 residues: 5'(3')-deoxyribonucleotidase (172 aa).

The active-site Nucleophile is the aspartate 8. Mg(2+)-binding residues include aspartate 8, aspartate 10, and aspartate 132. Residue aspartate 10 is the Proton donor of the active site.

It belongs to the 5'(3')-deoxyribonucleotidase family. Mg(2+) serves as cofactor.

In terms of biological role, dephosphorylates nucleoside monophosphates such as the 5' and 2'(3')-phosphates of deoxyribonucleotides in vitro. Also catalyzes the dephosphorylation of coenzyme A (CoA), pyridoxal-5'-phosphate (PLP), riboflavine-5-phosphate (FMN) and nicotinamide adenine dinucleotide phosphate (NADP) in vitro. This chain is 5'(3')-deoxyribonucleotidase (yorS), found in Bacillus subtilis (strain 168).